Here is a 381-residue protein sequence, read N- to C-terminus: E3 ubiquitin-protein ligase RNF13 (381 aa).

The signal sequence occupies residues 1-34 (MLLSIGMLMLSATQIYTIVTVQLFAFLNLLPVEA). At 35 to 182 (DILAYNFENG…IPEFSLPLEY (148 aa)) the chain is on the lumenal side. In terms of domain architecture, PA spans 64-160 (LKGFLINSKP…GEASANSLKE (97 aa)). Asn-88 carries an N-linked (GlcNAc...) asparagine glycan. A helical membrane pass occupies residues 183 to 203 (YLIPFLIIVGICLILIVIFMI). The Cytoplasmic portion of the chain corresponds to 204–381 (TKFVQDRHRA…ERDYRVTNTV (178 aa)). An RING-type; atypical zinc finger spans residues 240 to 282 (CAICLDEYEDGDKLRILPCSHAYHCKCVDPWLTKTKKTCPVCK). The interval 285 to 381 (VVPSQGDSDS…ERDYRVTNTV (97 aa)) is disordered. Composition is skewed to acidic residues over residues 292–305 (SDSE…ENEV) and 339–353 (SEYE…DSSD). Residues 370 to 381 (NDERDYRVTNTV) show a composition bias toward basic and acidic residues.

As to expression, widely expressed (at protein level). Lowest levels in the liver, moderate levels in the heart, intestine and spleen, and high levels in skeletal muscle, kidney, proventriculus and brain. Also expressed in inner ear after noise exposure.

It localises to the endoplasmic reticulum membrane. It is found in the late endosome membrane. Its subcellular location is the lysosome membrane. The protein localises to the nucleus inner membrane. The enzyme catalyses S-ubiquitinyl-[E2 ubiquitin-conjugating enzyme]-L-cysteine + [acceptor protein]-L-lysine = [E2 ubiquitin-conjugating enzyme]-L-cysteine + N(6)-ubiquitinyl-[acceptor protein]-L-lysine.. Its pathway is protein modification; protein ubiquitination. Its function is as follows. E3 ubiquitin-protein ligase that regulates cell proliferation. Involved in apoptosis regulation. Mediates ER stress-induced activation of JNK signaling pathway and apoptosis by promoting ERN1 activation and splicing of XBP1 mRNA. In Gallus gallus (Chicken), this protein is E3 ubiquitin-protein ligase RNF13.